The sequence spans 1082 residues: Protein SPT23 (1082 aa).

Disordered regions lie at residues 315–346, 376–417, and 457–476; these read NASN…PQSD, NNNN…FSDI, and ASAR…FMST. Low complexity predominate over residues 316–328; the sequence is ASNTTTPTSTSNA. The segment covering 329-346 has biased composition (polar residues); the sequence is QVSPMTNDTRSFSSPQSD. 2 stretches are compositionally biased toward low complexity: residues 376-391 and 399-416; these read NNNN…KTNT and HFPS…SFSD. Ser468 bears the Phosphoserine mark. Residues 508 to 585 form the IPT/TIG domain; the sequence is PSIQRVIPAQ…DPSETSMRNN (78 aa). ANK repeat units lie at residues 709–738 and 742–771; these read RGRT…HLND and FGFT…NIMK.

Its function is as follows. Dosage-dependent suppressor of Ty-induced promoter mutations. May exert its suppression effect through protein-protein interactions since does not present any of the motifs generally found in transcriptional activators or DNA binding proteins. The chain is Protein SPT23 (SPT23) from Saccharomyces cerevisiae (strain ATCC 204508 / S288c) (Baker's yeast).